We begin with the raw amino-acid sequence, 367 residues long: UDP-N-acetylglucosamine--N-acetylmuramyl-(pentapeptide) pyrophosphoryl-undecaprenol N-acetylglucosamine transferase (367 aa).

Residues 13 to 15 (TGG), N127, R168, S200, I251, and Q296 contribute to the UDP-N-acetyl-alpha-D-glucosamine site.

This sequence belongs to the glycosyltransferase 28 family. MurG subfamily.

The protein resides in the cell inner membrane. The catalysed reaction is di-trans,octa-cis-undecaprenyl diphospho-N-acetyl-alpha-D-muramoyl-L-alanyl-D-glutamyl-meso-2,6-diaminopimeloyl-D-alanyl-D-alanine + UDP-N-acetyl-alpha-D-glucosamine = di-trans,octa-cis-undecaprenyl diphospho-[N-acetyl-alpha-D-glucosaminyl-(1-&gt;4)]-N-acetyl-alpha-D-muramoyl-L-alanyl-D-glutamyl-meso-2,6-diaminopimeloyl-D-alanyl-D-alanine + UDP + H(+). The protein operates within cell wall biogenesis; peptidoglycan biosynthesis. Functionally, cell wall formation. Catalyzes the transfer of a GlcNAc subunit on undecaprenyl-pyrophosphoryl-MurNAc-pentapeptide (lipid intermediate I) to form undecaprenyl-pyrophosphoryl-MurNAc-(pentapeptide)GlcNAc (lipid intermediate II). The chain is UDP-N-acetylglucosamine--N-acetylmuramyl-(pentapeptide) pyrophosphoryl-undecaprenol N-acetylglucosamine transferase from Flavobacterium psychrophilum (strain ATCC 49511 / DSM 21280 / CIP 103535 / JIP02/86).